Reading from the N-terminus, the 251-residue chain is Spermatogenesis-associated protein 46 (251 aa).

Its subcellular location is the nucleus membrane. In terms of biological role, plays a role in spermiogenesis and fertilization. The sequence is that of Spermatogenesis-associated protein 46 (SPATA46) from Macaca fascicularis (Crab-eating macaque).